We begin with the raw amino-acid sequence, 467 residues long: Chromosomal replication initiator protein DnaA (467 aa).

The domain I, interacts with DnaA modulators stretch occupies residues 1–85 (MTTTLWPQVL…LEVGEYAIES (85 aa)). The tract at residues 85–130 (SFNEPENTSVPQPLRETKAEREAAEKAASSTSKKKSDSPPKKTIKH) is domain II. The interval 87-129 (NEPENTSVPQPLRETKAEREAAEKAASSTSKKKSDSPPKKTIK) is disordered. The span at 99–109 (RETKAEREAAE) shows a compositional bias: basic and acidic residues. The domain III, AAA+ region stretch occupies residues 131-347 (NLNTNFTFDT…GALKRVGAFA (217 aa)). ATP contacts are provided by G175, G177, K178, and T179. Positions 348–467 (QFTQQLVTVD…FNSLIRIITN (120 aa)) are domain IV, binds dsDNA.

This sequence belongs to the DnaA family. Oligomerizes as a right-handed, spiral filament on DNA at oriC.

The protein localises to the cytoplasm. In terms of biological role, plays an essential role in the initiation and regulation of chromosomal replication. ATP-DnaA binds to the origin of replication (oriC) to initiate formation of the DNA replication initiation complex once per cell cycle. Binds the DnaA box (a 9 base pair repeat at the origin) and separates the double-stranded (ds)DNA. Forms a right-handed helical filament on oriC DNA; dsDNA binds to the exterior of the filament while single-stranded (ss)DNA is stabiized in the filament's interior. The ATP-DnaA-oriC complex binds and stabilizes one strand of the AT-rich DNA unwinding element (DUE), permitting loading of DNA polymerase. After initiation quickly degrades to an ADP-DnaA complex that is not apt for DNA replication. Binds acidic phospholipids. This Hydrogenovibrio crunogenus (strain DSM 25203 / XCL-2) (Thiomicrospira crunogena) protein is Chromosomal replication initiator protein DnaA.